The chain runs to 163 residues: MSQFSHFNEQGRAKMVDISDKSSTMRTAVAASSVRMIKEVFHKIEQREIGKGDVLSVAQVAGIMAAKQTSTIIPMCHPLALKGVDISFDWEEDGNAHILNIQVQVKTKGSTGVEMEALTSASVCALTVYDMCKAIDKGMIIGPTYLIEKTGGKNGDFHRASDI.

Residues 75-77 and 115-116 each bind substrate; these read MCH and ME. The active site involves Asp130.

Belongs to the MoaC family. In terms of assembly, homohexamer; trimer of dimers.

The catalysed reaction is (8S)-3',8-cyclo-7,8-dihydroguanosine 5'-triphosphate = cyclic pyranopterin phosphate + diphosphate. The protein operates within cofactor biosynthesis; molybdopterin biosynthesis. Functionally, catalyzes the conversion of (8S)-3',8-cyclo-7,8-dihydroguanosine 5'-triphosphate to cyclic pyranopterin monophosphate (cPMP). In Bacillus pumilus (strain SAFR-032), this protein is Cyclic pyranopterin monophosphate synthase.